The chain runs to 202 residues: Glycerol-3-phosphate acyltransferase (202 aa).

A run of 6 helical transmembrane segments spans residues 2 to 22, 54 to 74, 85 to 105, 118 to 138, 140 to 160, and 162 to 182; these read MIVLMLLLAYIVGSFPSGVII, FVVTFLDIFKGFIVVFFPLLF, FFTNGLIVGVFAILGHVYPIF, AGVVLGVAPILLLILAAIFFL, LYLTKYVSLSSIVAAICCVIG, and LIIHDYILLVVSIIVAILLIF.

This sequence belongs to the PlsY family. As to quaternary structure, probably interacts with PlsX.

It is found in the cell membrane. The catalysed reaction is an acyl phosphate + sn-glycerol 3-phosphate = a 1-acyl-sn-glycero-3-phosphate + phosphate. Its pathway is lipid metabolism; phospholipid metabolism. In terms of biological role, catalyzes the transfer of an acyl group from acyl-phosphate (acyl-PO(4)) to glycerol-3-phosphate (G3P) to form lysophosphatidic acid (LPA). This enzyme utilizes acyl-phosphate as fatty acyl donor, but not acyl-CoA or acyl-ACP. This is Glycerol-3-phosphate acyltransferase from Staphylococcus carnosus (strain TM300).